Reading from the N-terminus, the 182-residue chain is MAEFPSKVSTRTSSPAQGAEASVSALRPDLGFVRSRLGALMLLQLVLGLLVWALIADTPYHLYPAYGWVMFVAVFLWLVTIVLFNLYLFQLHMKLYMVPWPLVLMIFNISATVLYITAFIACSAAVDLTSLRGTRPYNQRAAASFFACLVMIAYGVSAFFSYQAWRGVGSNAATSQMAGGYA.

Residues 1-35 (MAEFPSKVSTRTSSPAQGAEASVSALRPDLGFVRS) are Cytoplasmic-facing. Ser-9 bears the Phosphoserine mark. The MARVEL domain occupies 32-166 (FVRSRLGALM…SAFFSYQAWR (135 aa)). Residues 36–56 (RLGALMLLQLVLGLLVWALIA) traverse the membrane as a helical segment. Residues 57–68 (DTPYHLYPAYGW) are Extracellular-facing. The chain crosses the membrane as a helical span at residues 69–89 (VMFVAVFLWLVTIVLFNLYLF). Residues 90-99 (QLHMKLYMVP) lie on the Cytoplasmic side of the membrane. Residues 100–120 (WPLVLMIFNISATVLYITAFI) traverse the membrane as a helical segment. At 121 to 141 (ACSAAVDLTSLRGTRPYNQRA) the chain is on the extracellular side. A helical membrane pass occupies residues 142-162 (AASFFACLVMIAYGVSAFFSY). The Cytoplasmic portion of the chain corresponds to 163–182 (QAWRGVGSNAATSQMAGGYA).

Belongs to the MAL family. In terms of assembly, forms oligomers. Phosphorylated.

It localises to the cell membrane. The protein localises to the myelin membrane. The protein resides in the apical cell membrane. It is found in the golgi apparatus. In terms of biological role, main component of the myelin sheath that plays an important role in myelin membrane biogenesis and myelination. Plays an essential function in apical endocytosis. Regulates epithelial development through the regulation of apical endocytosis. Part of the intracellular machinery that mediates basolateral-to-apical transport of ICAM-1, an essential adhesion receptor in epithelial cells, from the subapical compartment in hepatic epithelial cells. This is Plasmolipin from Homo sapiens (Human).